The sequence spans 452 residues: Trigger factor (452 aa).

A PPIase FKBP-type domain is found at 171–256 (GDRVTISFKG…ATKVEAPQDT (86 aa)).

It belongs to the FKBP-type PPIase family. Tig subfamily.

Its subcellular location is the cytoplasm. It catalyses the reaction [protein]-peptidylproline (omega=180) = [protein]-peptidylproline (omega=0). Functionally, involved in protein export. Acts as a chaperone by maintaining the newly synthesized protein in an open conformation. Functions as a peptidyl-prolyl cis-trans isomerase. This is Trigger factor from Rhodopseudomonas palustris (strain HaA2).